Consider the following 163-residue polypeptide: Small ribosomal subunit protein uS5 (163 aa).

The S5 DRBM domain occupies 8 to 71 (FIEKVVSLNR…EQARKAMMKI (64 aa)).

The protein belongs to the universal ribosomal protein uS5 family. Part of the 30S ribosomal subunit. Contacts proteins S4 and S8.

Functionally, with S4 and S12 plays an important role in translational accuracy. Its function is as follows. Located at the back of the 30S subunit body where it stabilizes the conformation of the head with respect to the body. This chain is Small ribosomal subunit protein uS5, found in Lawsonia intracellularis (strain PHE/MN1-00).